A 481-amino-acid polypeptide reads, in one-letter code: G-protein coupled receptor 37-like 1 (481 aa).

The N-terminal stretch at 1-25 (MRWLWPLAVSLAVILAVGLSRVSGG) is a signal peptide. Disordered stretches follow at residues 26–58 (APLH…GVQQ) and 70–108 (PIHP…NLTG). Residues 26–134 (APLHLGRHRA…ESSYSAYAIM (109 aa)) are Extracellular-facing. O-linked (GalNAc...) threonine glycans are attached at residues Thr-79 and Thr-85. Ser-86 is a glycosylation site (O-linked (GalNAc...) serine). A glycan (O-linked (GalNAc...) threonine) is linked at Thr-95. A glycan (N-linked (GlcNAc...) asparagine) is linked at Asn-105. O-linked (GalNAc...) threonine glycosylation occurs at Thr-107. A helical membrane pass occupies residues 135 to 155 (LLALVVFAVGIVGNLSVMCIV). The Cytoplasmic segment spans residues 156-167 (WHSYYLKSAWNS). The chain crosses the membrane as a helical span at residues 168-188 (ILASLALWDFLVLFFCLPIVI). The Extracellular portion of the chain corresponds to 189–205 (FNEITKQRLLGDVSCRA). Cys-203 and Cys-286 are oxidised to a cystine. Residues 206-226 (VPFMEVSSLGVTTFSLCALGI) traverse the membrane as a helical segment. Topologically, residues 227 to 251 (DRFHVATSTLPKVRPIERCQSILAK) are cytoplasmic. The helical transmembrane segment at 252–272 (LAVIWVGSMTLAVPELLLWQL) threads the bilayer. The Extracellular segment spans residues 273-310 (AQEPAPTMGTLDSCIMKPSASLPESLYSLVMTYQNARM). The helical transmembrane segment at 311–331 (WWYFGCYFCLPILFTVTCQLV) threads the bilayer. Residues 332-361 (TWRVRGPPGRKSECRASKHEQCESQLNSTV) are Cytoplasmic-facing. A helical transmembrane segment spans residues 362–382 (VGLTVVYAFCTLPENVCNIVV). The Extracellular segment spans residues 383–398 (AYLSTELTRQTLDLLG). A helical membrane pass occupies residues 399–419 (LINQFSTFFKGAITPVLLLCI). Residues 420 to 481 (CRPLGQAFLD…PPLLPLGTPC (62 aa)) lie on the Cytoplasmic side of the membrane. Phosphoserine is present on Ser-471. Position 479 is a phosphothreonine (Thr-479).

It belongs to the G-protein coupled receptor 1 family. In terms of assembly, interacts with the PTCH1 receptor. Post-translationally, O-glycosylated. In terms of processing, undergoes metalloprotease-mediated cleavage which reduces its constitutive activity. Ubiquitinated. Expressed in primary cortical astrocytes (at protein level). Expressed in the central nervous system.

It localises to the cell membrane. Its subcellular location is the cell projection. It is found in the cilium membrane. Its function is as follows. G-protein coupled receptor. Has been shown to bind the neuroprotective and glioprotective factor prosaposin (PSAP), leading to endocytosis followed by an ERK phosphorylation cascade. However, other studies have shown that prosaposin does not increase activity. It has been suggested that GPR37L1 is a constitutively active receptor which signals through the guanine nucleotide-binding protein G(s) subunit alpha. Participates in the regulation of postnatal cerebellar development by modulating the Shh pathway. Regulates baseline blood pressure in females and protects against cardiovascular stress in males. Mediates inhibition of astrocyte glutamate transporters and reduction in neuronal N-methyl-D-aspartate receptor activity. The protein is G-protein coupled receptor 37-like 1 (GPR37L1) of Homo sapiens (Human).